The sequence spans 292 residues: 4-hydroxy-tetrahydrodipicolinate synthase (292 aa).

Residue Thr-44 participates in pyruvate binding. The active-site Proton donor/acceptor is the Tyr-132. Lys-161 serves as the catalytic Schiff-base intermediate with substrate. Position 203 (Ile-203) interacts with pyruvate.

Belongs to the DapA family. Homotetramer.

The protein localises to the cytoplasm. It catalyses the reaction L-aspartate 4-semialdehyde + pyruvate = (2S,4S)-4-hydroxy-2,3,4,5-tetrahydrodipicolinate + H2O + H(+). It functions in the pathway amino-acid biosynthesis; L-lysine biosynthesis via DAP pathway; (S)-tetrahydrodipicolinate from L-aspartate: step 3/4. Its activity is regulated as follows. Is feedback inhibited by lysine. Is competitively inhibited by 2-oxobutyrate with respect to pyruvate. Catalyzes the condensation of (S)-aspartate-beta-semialdehyde [(S)-ASA] and pyruvate to 4-hydroxy-tetrahydrodipicolinate (HTPA). This is 4-hydroxy-tetrahydrodipicolinate synthase from Rhizobium meliloti (Ensifer meliloti).